We begin with the raw amino-acid sequence, 260 residues long: Acetylglutamate kinase (260 aa).

Substrate contacts are provided by residues 41–42 (GG), arginine 63, and asparagine 157.

It belongs to the acetylglutamate kinase family. ArgB subfamily.

The protein resides in the cytoplasm. It carries out the reaction N-acetyl-L-glutamate + ATP = N-acetyl-L-glutamyl 5-phosphate + ADP. It participates in amino-acid biosynthesis; L-arginine biosynthesis; N(2)-acetyl-L-ornithine from L-glutamate: step 2/4. Catalyzes the ATP-dependent phosphorylation of N-acetyl-L-glutamate. This chain is Acetylglutamate kinase, found in Acidobacterium capsulatum (strain ATCC 51196 / DSM 11244 / BCRC 80197 / JCM 7670 / NBRC 15755 / NCIMB 13165 / 161).